A 509-amino-acid polypeptide reads, in one-letter code: Maturase K (509 aa).

Belongs to the intron maturase 2 family. MatK subfamily.

The protein resides in the plastid. It is found in the chloroplast. Functionally, usually encoded in the trnK tRNA gene intron. Probably assists in splicing its own and other chloroplast group II introns. The chain is Maturase K from Otacanthus azureus (Brazilian snapdragon).